Consider the following 775-residue polypeptide: Subtilisin-like protease SBT3.8 (775 aa).

An N-terminal signal peptide occupies residues 1–26; that stretch reads MKSCRTLIFVAIILNGLSTFVAHAGA. A propeptide spans 27 to 109 (activation peptide); that stretch reads ESKVHIVYLG…VTPDSFYQLD (83 aa). In terms of domain architecture, Inhibitor I9 spans 30 to 108; sequence VHIVYLGEKQ…HVTPDSFYQL (79 aa). Residues 113-622 enclose the Peptidase S8 domain; it reads TWDYLGLSVA…GGLVNPEKAA (510 aa). A glycan (N-linked (GlcNAc...) asparagine) is linked at asparagine 129. Catalysis depends on aspartate 143, which acts as the Charge relay system. Asparagine 174 and asparagine 202 each carry an N-linked (GlcNAc...) asparagine glycan. The active-site Charge relay system is histidine 218. The 93-residue stretch at 384-476 folds into the PA domain; it reads SLVYPENPGN…VDYELGTDIL (93 aa). N-linked (GlcNAc...) asparagine glycosylation is found at asparagine 395, asparagine 410, and asparagine 538. Serine 553 serves as the catalytic Charge relay system. N-linked (GlcNAc...) asparagine glycans are attached at residues asparagine 645, asparagine 721, and asparagine 756.

The protein belongs to the peptidase S8 family.

The protein localises to the secreted. The protein is Subtilisin-like protease SBT3.8 of Arabidopsis thaliana (Mouse-ear cress).